A 470-amino-acid chain; its full sequence is Argininosuccinate lyase (470 aa).

It belongs to the lyase 1 family. Argininosuccinate lyase subfamily.

It is found in the cytoplasm. The enzyme catalyses 2-(N(omega)-L-arginino)succinate = fumarate + L-arginine. Its pathway is amino-acid biosynthesis; L-arginine biosynthesis; L-arginine from L-ornithine and carbamoyl phosphate: step 3/3. The protein is Argininosuccinate lyase of Mycobacterium tuberculosis (strain CDC 1551 / Oshkosh).